Here is a 277-residue protein sequence, read N- to C-terminus: MALKTFNPTTPGQRQLVMVDRSALYKGKPVKALTEGKQSSGGRNNTGRITVRFLGGGHKQSYRTVDFKRDKVDVPATVERLEYDPNRTAFIALVKYQDGELAYILAPQRLAVGDTIVAGNYVDVKPGNVMPLGNMPVGTIVHNIEVKIGKGGQLARSAGTYAQLVGRDHDYVIVRLNSGEQRLVHGRCRGTIGAVSNPDHMNTSIGKAGRKRWMGRRPHNRGVAMNPIDHPHGGGEGRTSGGRHPVTPWGKPTKGKKTRTNKSTDKFILLSRHKRKK.

The segment at 222–277 (GVAMNPIDHPHGGGEGRTSGGRHPVTPWGKPTKGKKTRTNKSTDKFILLSRHKRKK) is disordered.

Belongs to the universal ribosomal protein uL2 family. As to quaternary structure, part of the 50S ribosomal subunit. Forms a bridge to the 30S subunit in the 70S ribosome.

Its function is as follows. One of the primary rRNA binding proteins. Required for association of the 30S and 50S subunits to form the 70S ribosome, for tRNA binding and peptide bond formation. It has been suggested to have peptidyltransferase activity; this is somewhat controversial. Makes several contacts with the 16S rRNA in the 70S ribosome. This chain is Large ribosomal subunit protein uL2, found in Bradyrhizobium sp. (strain ORS 278).